Here is a 259-residue protein sequence, read N- to C-terminus: uncharacterized protein (259 aa).

The next 3 helical transmembrane spans lie at 55–75 (ILIL…SYLI), 85–105 (FPSI…FFSS), and 127–147 (FFFA…LCCG).

It localises to the membrane. This is an uncharacterized protein from Arabidopsis thaliana (Mouse-ear cress).